Here is a 77-residue protein sequence, read N- to C-terminus: UPF0401 protein UTI89_C4989 (77 aa).

This sequence belongs to the UPF0401 family.

This chain is UPF0401 protein UTI89_C4989, found in Escherichia coli (strain UTI89 / UPEC).